The primary structure comprises 926 residues: Ubiquitin carboxyl-terminal hydrolase 4 (926 aa).

The 124-residue stretch at 205–328 folds into the Rhodanese domain; sequence SQMEILLIDI…WLKSNYGRQV (124 aa). Phosphoserine is present on serine 443. A USP domain is found at 562 to 923; the sequence is VGLENLGNSC…NAYVLFYHRV (362 aa). Cysteine 571 functions as the Nucleophile in the catalytic mechanism. The active-site Proton acceptor is histidine 880.

It belongs to the peptidase C19 family. Interacts with BRO1, RFU1 and VPS32. Associates with the 26S proteasome.

Its subcellular location is the cytoplasm. It is found in the late endosome membrane. The enzyme catalyses Thiol-dependent hydrolysis of ester, thioester, amide, peptide and isopeptide bonds formed by the C-terminal Gly of ubiquitin (a 76-residue protein attached to proteins as an intracellular targeting signal).. Its activity is regulated as follows. RFU1 is an inhibitor of deubiquitination activity. In terms of biological role, ubiquitin thioesterase that acts at the late endosome/prevacuolar compartment to recover ubiquitin from ubiquitinated membrane proteins en route to the vacuole. Also removes ubiquitin from soluble proteins targeted to proteasomes. Is essential to maintain a normal level of free ubiquitin. Involved in the ammonium-induced down-regulation of the GAP1 permease and the UME3 destruction in response to oxidative stress. Has a role in the RAD9 checkpoint response to TOP1 poisons. Required for promoting coordination of DNA replication and avoids DNA overreplication. This chain is Ubiquitin carboxyl-terminal hydrolase 4 (DOA4), found in Saccharomyces cerevisiae (strain ATCC 204508 / S288c) (Baker's yeast).